The following is a 390-amino-acid chain: HIT domain-containing protein DDB_G0272839 (390 aa).

The tract at residues 168–201 (DNENEKEKEKEMELDNDNTNTESIPPITSKSTST) is disordered. Over residues 184 to 201 (DNTNTESIPPITSKSTST) the composition is skewed to low complexity. The region spanning 232–343 (YFCNKPESFL…ISNDYNTKYL (112 aa)) is the HIT domain.

This chain is HIT domain-containing protein DDB_G0272839, found in Dictyostelium discoideum (Social amoeba).